Here is a 447-residue protein sequence, read N- to C-terminus: Serine/threonine-protein phosphatase 2A 55 kDa regulatory subunit B alpha isoform (447 aa).

Ala-2 carries the N-acetylalanine modification. 7 WD repeats span residues 11-80, 94-174, 175-218, 227-270, 288-325, 347-381, and 414-446; these read QWCF…FQSH, EKIN…IFAN, AHTY…VDIK, EVIT…KLFE, ISDV…TYQV, ECCW…TLEA, and DFNK…QDKV.

This sequence belongs to the phosphatase 2A regulatory subunit B family. PP2A consists of a common heterodimeric core enzyme, composed of a 36 kDa catalytic subunit (subunit C) and a 65 kDa constant regulatory subunit (PR65 or subunit A), that associates with a variety of regulatory subunits. Proteins that associate with the core dimer include three families of regulatory subunits B (the R2/B/PR55/B55, R3/B''/PR72/PR130/PR59 and R5/B'/B56 families), the 48 kDa variable regulatory subunit, viral proteins, and cell signaling molecules. Interacts with the PP2A C catalytic subunit PPP2CA. Interacts with the PP2A A subunit PPP2R1A. Interacts with TP53. Interacts with IER5. Interacts with MFHAS1; the interaction is direct. Interacts with PABIR1/FAM122A (via its N-terminus); the interaction is direct and inhibits PP2A activity. Interacts with ARPP19; the interaction is direct and inhibits PP2A activity. Interacts with CRTC3. Expressed in all tissues examined.

Its function is as follows. Substrate-recognition subunit of protein phosphatase 2A (PP2A) that plays a key role in cell cycle by controlling mitosis entry and exit. Involved in chromosome clustering during late mitosis by mediating dephosphorylation of MKI67. Essential for serine/threonine-protein phosphatase 2A-mediated dephosphorylation of WEE1, preventing its ubiquitin-mediated proteolysis, increasing WEE1 protein levels, and promoting the G2/M checkpoint. This is Serine/threonine-protein phosphatase 2A 55 kDa regulatory subunit B alpha isoform (PPP2R2A) from Homo sapiens (Human).